The primary structure comprises 220 residues: Regulatory protein VanRB (220 aa).

Residues arginine 4–leucine 117 form the Response regulatory domain. The residue at position 53 (aspartate 53) is a 4-aspartylphosphate. A DNA-binding region (ompR/PhoB-type) is located at residues alanine 124 to glutamate 218.

Post-translationally, may be phosphorylated by VanSB. May also be dephosphorylated by VanSB.

The protein localises to the cytoplasm. Functionally, member of the two-component regulatory system VanSB/VanRB. Activates the transcription of vanSB, vanYB and vanW in response to vancomycin which results in vancomycin resistance. The protein is Regulatory protein VanRB (vanRB) of Enterococcus faecalis (strain ATCC 700802 / V583).